A 635-amino-acid polypeptide reads, in one-letter code: MCGIVGMVAGRDVSGLLLEGLRRLEYRGYDSAGIAVVGSDCALRLLRCEGRVQSLCALLGQSPLCGTMGIAHTRWATHGKPCAANAHPHCSESVAIVHNGIVENHRSLREMLVTRGYFFHSQTDSEVLAHLLHWELRYTAHLLLAVKKVLTQVRGTYGLLCMDAASPGRLIAARSGSPLAVGLGCGENFVTSDPLALAHVTQRFLYLEEGDIADVHRDSVCVHDAQGNVVARPVVTYQMQLCTQDKGTHRHHMHQEIWQQPHAIRHTLNAYMSFSSSSRAQVRTFGEDRVLDGTSCKTFERLFRRITRVRIIACGTSYHAGLVARYWFEAFAGVGCQVEIASEYRYRTSVVHAREIVLTISQSGETADTIAALRLAKTQGYLCAIAICNGARSTLVRESDAVLLTHAGSEIGVASTKSFTTQLVCLLVLTRMIAQAKKILTQEPEDALSAALQRLPQDVEHVLECEADVARCARHFVHAQHALFLGRGELYPIAIESALKLKEISYIHAEAYAAGELKHGPLALVDAQMPVVAIAPASPGVLFEKMASNIEEVRARGGMLYIFTDVPERFGPVCTPEADAPEGACSQIVTVPSVSPLTAPIFYAVPLQLLAYHIALLKGTDIDQPRNLAKSVTVE.

C2 (nucleophile; for GATase activity) is an active-site residue. Residues 2-218 enclose the Glutamine amidotransferase type-2 domain; sequence CGIVGMVAGR…EGDIADVHRD (217 aa). 2 consecutive SIS domains span residues 299 to 439 and 472 to 625; these read FERL…AKKI and CARH…IDQP. Residue K630 is the For Fru-6P isomerization activity of the active site.

As to quaternary structure, homodimer.

It localises to the cytoplasm. It catalyses the reaction D-fructose 6-phosphate + L-glutamine = D-glucosamine 6-phosphate + L-glutamate. Its function is as follows. Catalyzes the first step in hexosamine metabolism, converting fructose-6P into glucosamine-6P using glutamine as a nitrogen source. The protein is Glutamine--fructose-6-phosphate aminotransferase [isomerizing] of Treponema pallidum (strain Nichols).